Reading from the N-terminus, the 551-residue chain is Endolytic murein transglycosylase (551 aa).

Residues 1-187 (MSEKSREEEK…PKKEKKSHVK (187 aa)) are Cytoplasmic-facing. Residues 38–180 (VRTPANEPSA…EGAKPAKPKK (143 aa)) form a disordered region. Low complexity-rich tracts occupy residues 100 to 110 (PSSPAEESGSR) and 145 to 157 (QAGP…ATET). The segment covering 159–174 (DIIRDTSRRSRREGAK) has biased composition (basic and acidic residues). The helical transmembrane segment at 188–208 (AFVISFLVFLALLSAGGYFGY) threads the bilayer. The Extracellular portion of the chain corresponds to 209 to 551 (QYVLDSLLPI…VAEHVNSKLN (343 aa)).

It belongs to the transglycosylase MltG family.

Its subcellular location is the cell membrane. It catalyses the reaction a peptidoglycan chain = a peptidoglycan chain with N-acetyl-1,6-anhydromuramyl-[peptide] at the reducing end + a peptidoglycan chain with N-acetylglucosamine at the non-reducing end.. Functionally, functions as a peptidoglycan terminase that cleaves nascent peptidoglycan strands endolytically to terminate their elongation. Involved in peripheral peptidoglycan (PG) synthesis. In Streptococcus pneumoniae serotype 2 (strain D39 / NCTC 7466), this protein is Endolytic murein transglycosylase.